An 81-amino-acid polypeptide reads, in one-letter code: Small ribosomal subunit protein bS16 (81 aa).

It belongs to the bacterial ribosomal protein bS16 family.

The sequence is that of Small ribosomal subunit protein bS16 from Teredinibacter turnerae (strain ATCC 39867 / T7901).